The chain runs to 921 residues: Probable dipeptidyl-aminopeptidase B (921 aa).

Disordered stretches follow at residues 1 to 33 (MAGH…TAST) and 45 to 66 (VAAN…RGER). At 1-109 (MAGHPEENAQ…NKSVDKKLRR (109 aa)) the chain is on the cytoplasmic side. Polar residues predominate over residues 10–22 (QLLSTEQESMSRN). The span at 23–33 (SSDSVASTAST) shows a compositional bias: low complexity. The helical; Signal-anchor for type II membrane protein transmembrane segment at 110–130 (LIWIIGGVFIGAWVLALFIFL) threads the bilayer. Topologically, residues 131-921 (GKQAYKHSSE…VPLEIDAAKV (791 aa)) are vacuolar. Residues 138-157 (SSESPHDPQATSSRGSGKKV) form a disordered region. Asparagine 362 is a glycosylation site (N-linked (GlcNAc...) asparagine). The active-site Charge relay system is the serine 768. N-linked (GlcNAc...) asparagine glycosylation occurs at asparagine 822. Catalysis depends on charge relay system residues aspartate 845 and histidine 878.

It belongs to the peptidase S9B family.

It is found in the vacuole membrane. The enzyme catalyses Release of an N-terminal dipeptide, Xaa-Yaa-|-Zaa-, from a polypeptide, preferentially when Yaa is Pro, provided Zaa is neither Pro nor hydroxyproline.. Type IV dipeptidyl-peptidase which removes N-terminal dipeptides sequentially from polypeptides having unsubstituted N-termini provided that the penultimate residue is proline. The chain is Probable dipeptidyl-aminopeptidase B (dapB) from Botryotinia fuckeliana (strain B05.10) (Noble rot fungus).